A 358-amino-acid chain; its full sequence is Photosystem II protein D1 3 (358 aa).

A run of 3 helical transmembrane segments spans residues 28 to 45, 117 to 132, and 141 to 155; these read YIGW…AATT, HFLI…QWEL, and WICV…AAMA. Histidine 117 lines the chlorophyll a pocket. Tyrosine 125 contacts pheophytin a. Positions 169 and 188 each coordinate [CaMn4O5] cluster. Residues 196 to 217 form a helical membrane-spanning segment; sequence FHMLGVAGVFGGSLFSAMHGSL. Histidine 197 contributes to the chlorophyll a binding site. A quinone contacts are provided by residues histidine 214 and 263-264; that span reads SF. Fe cation is bound at residue histidine 214. Histidine 271 provides a ligand contact to Fe cation. A helical transmembrane segment spans residues 273–287; it reads LLGAWPVVGIWFTSM. [CaMn4O5] cluster-binding residues include histidine 331, glutamate 332, aspartate 341, and alanine 343. A propeptide spanning residues 344 to 358 is cleaved from the precursor; it reads TVESTPVALQAPAIG.

It belongs to the reaction center PufL/M/PsbA/D family. As to quaternary structure, PSII is composed of 1 copy each of membrane proteins PsbA, PsbB, PsbC, PsbD, PsbE, PsbF, PsbH, PsbI, PsbJ, PsbK, PsbL, PsbM, PsbT, PsbX, PsbY, PsbZ, Psb30/Ycf12, peripheral proteins PsbO, CyanoQ (PsbQ), PsbU, PsbV and a large number of cofactors. It forms dimeric complexes. The D1/D2 heterodimer binds P680, chlorophylls that are the primary electron donor of PSII, and subsequent electron acceptors. It shares a non-heme iron and each subunit binds pheophytin, quinone, additional chlorophylls, carotenoids and lipids. D1 provides most of the ligands for the Mn4-Ca-O5 cluster of the oxygen-evolving complex (OEC). There is also a Cl(-1) ion associated with D1 and D2, which is required for oxygen evolution. The PSII complex binds additional chlorophylls, carotenoids and specific lipids. serves as cofactor. Post-translationally, tyr-160 forms a radical intermediate that is referred to as redox-active TyrZ, YZ or Y-Z. In terms of processing, C-terminally processed by CtpA; processing is essential to allow assembly of the oxygen-evolving complex and thus photosynthetic growth.

It is found in the cellular thylakoid membrane. The enzyme catalyses 2 a plastoquinone + 4 hnu + 2 H2O = 2 a plastoquinol + O2. In terms of biological role, photosystem II (PSII) is a light-driven water:plastoquinone oxidoreductase that uses light energy to abstract electrons from H(2)O, generating O(2) and a proton gradient subsequently used for ATP formation. It consists of a core antenna complex that captures photons, and an electron transfer chain that converts photonic excitation into a charge separation. The D1/D2 (PsbA/PsbD) reaction center heterodimer binds P680, the primary electron donor of PSII as well as several subsequent electron acceptors. This is Photosystem II protein D1 3 from Synechococcus sp. (strain CC9311).